Here is a 786-residue protein sequence, read N- to C-terminus: Progesterone receptor (786 aa).

The segment covering 1 to 10 has biased composition (basic and acidic residues); that stretch reads MTEVKSKETR. 3 disordered regions span residues 1 to 95, 110 to 212, and 252 to 279; these read MTEV…SKDC, AAPW…ASPA, and SAFG…DGKE. A modulating, Pro-Rich region spans residues 1-420; the sequence is MTEVKSKETR…YSFESLPQKI (420 aa). Lys7 participates in a covalent cross-link: Glycyl lysine isopeptide (Lys-Gly) (interchain with G-Cter in SUMO). The span at 48-79 shows a compositional bias: acidic residues; that stretch reads DEEEEEEENEEEEEEEEPQQREEEEEEEEEDR. The segment covering 143–154 has biased composition (pro residues); sequence APGPSQPRPGAP. Residues 186–197 show a composition bias toward basic and acidic residues; sequence AEERGFPERDAG. Low complexity predominate over residues 203 to 212; sequence LAPAAAASPA. Phosphoserine is present on residues Ser210 and Ser259. Lys294 is covalently cross-linked (Glycyl lysine isopeptide (Lys-Gly) (interchain with G-Cter in SUMO); alternate). Residue Lys294 forms a Glycyl lysine isopeptide (Lys-Gly) (interchain with G-Cter in ubiquitin); alternate linkage. Residue Lys385 forms a Glycyl lysine isopeptide (Lys-Gly) (interchain with G-Cter in SUMO) linkage. 2 NR C4-type zinc fingers span residues 421–441 and 457–481; these read CLIC…CGSC and CAGR…LRKC. A DNA-binding region (nuclear receptor) is located at residues 421–486; sequence CLICGDEASG…RLRKCCQAGM (66 aa). Ser529 bears the Phosphoserine mark. Residues 532–766 form the NR LBD domain; that stretch reads QEIPFVPPMI…EFPEMMSEVI (235 aa).

It belongs to the nuclear hormone receptor family. NR3 subfamily. Post-translationally, phosphorylation of Ser-529 is sharply increased upon progesterone treatment, whereas phosphorylation of Ser-210 and Ser-259 is modestly induced by progesterone. Ubiquitinated. Ubiquitination is increased by progesterone and represses sumoylation at the same site. In terms of processing, sumoylation is hormone-dependent and represses transcriptional activity. Sumoylation on all three sites is enhanced by PIAS3. Desumoylated by SENP1. Sumoylation on Lys-385, the main site of sumoylation, is repressed by ubiquitination on the same site. As to expression, oviduct and bursa of Fabricius.

Its subcellular location is the nucleus. The protein localises to the cytoplasm. The steroid hormones and their receptors are involved in the regulation of eukaryotic gene expression and affect cellular proliferation and differentiation in target tissues. This chain is Progesterone receptor (PGR), found in Gallus gallus (Chicken).